The chain runs to 144 residues: Large ribosomal subunit protein uL15 (144 aa).

The tract at residues 24–52 (GSGLGKTAGRGHKGLKSRSGGSVRPGFEG) is disordered.

Belongs to the universal ribosomal protein uL15 family. Part of the 50S ribosomal subunit.

Functionally, binds to the 23S rRNA. The chain is Large ribosomal subunit protein uL15 from Cellvibrio japonicus (strain Ueda107) (Pseudomonas fluorescens subsp. cellulosa).